The chain runs to 354 residues: Protein Wnt-9a (354 aa).

An N-terminal signal peptide occupies residues 1–15 (MALLRALLGLLACTP). Disulfide bonds link Cys85/Cys96, Cys133/Cys141, Cys143/Cys160, Cys207/Cys221, and Cys209/Cys216. An N-linked (GlcNAc...) asparagine glycan is attached at Asn95. The O-palmitoleoyl serine; by PORCN moiety is linked to residue Ser213. The tract at residues 246–271 (GSTTNEATGEGDISPPKKSIPGHSDQ) is disordered. Intrachain disulfides connect Cys288/Cys313, Cys302/Cys308, Cys312/Cys352, Cys328/Cys343, Cys330/Cys340, and Cys335/Cys336.

It belongs to the Wnt family. Post-translationally, palmitoleoylation is required for efficient binding to frizzled receptors. Depalmitoleoylation leads to Wnt signaling pathway inhibition.

It is found in the secreted. It localises to the extracellular space. Its subcellular location is the extracellular matrix. Ligand for members of the frizzled family of seven transmembrane receptors. Functions in the canonical Wnt/beta-catenin signaling pathway. Plays a role in embryonic chondrocyte maturation and in embryonic bone mineralization. This chain is Protein Wnt-9a (WNT9A), found in Gallus gallus (Chicken).